Consider the following 512-residue polypeptide: NAD(P)H-quinone oxidoreductase subunit 2, organellar chromatophore (512 aa).

14 helical membrane passes run 6-26, 43-63, 80-100, 107-127, 133-153, 168-188, 210-230, 242-262, 276-296, 304-324, 332-352, 376-396, 411-431, and 464-484; these read LLAL…LLAL, WVPP…ASQW, LAIA…MISW, GAPM…AMFL, LVSI…LAGY, LLVG…LYGL, AALA…AVPF, PTPI…ALAL, WKFL…IVAL, MLAY…VCGT, ILYL…VILF, IGLS…GFFG, LLVV…ISVI, and VALL…NPLF.

It belongs to the complex I subunit 2 family. In terms of assembly, NDH-1 can be composed of about 15 different subunits; different subcomplexes with different compositions have been identified which probably have different functions.

It localises to the plastid. The protein localises to the organellar chromatophore thylakoid membrane. It catalyses the reaction a plastoquinone + NADH + (n+1) H(+)(in) = a plastoquinol + NAD(+) + n H(+)(out). The catalysed reaction is a plastoquinone + NADPH + (n+1) H(+)(in) = a plastoquinol + NADP(+) + n H(+)(out). NDH-1 shuttles electrons from an unknown electron donor, via FMN and iron-sulfur (Fe-S) centers, to quinones in the respiratory and/or the photosynthetic chain. The immediate electron acceptor for the enzyme in this species is believed to be plastoquinone. Couples the redox reaction to proton translocation, and thus conserves the redox energy in a proton gradient. Cyanobacterial NDH-1 also plays a role in inorganic carbon-concentration. The polypeptide is NAD(P)H-quinone oxidoreductase subunit 2, organellar chromatophore (Paulinella chromatophora).